A 279-amino-acid chain; its full sequence is Putative F-box protein At1g50880 (279 aa).

The 51-residue stretch at 19 to 69 (SSSMSSIPLDVTSKILAKLPAKSVLRARCVSKQWSSISTDPYFISNMFPKQ) folds into the F-box domain.

In Arabidopsis thaliana (Mouse-ear cress), this protein is Putative F-box protein At1g50880.